A 337-amino-acid chain; its full sequence is tRNA N6-adenosine threonylcarbamoyltransferase (337 aa).

Histidine 111 and histidine 115 together coordinate Fe cation. Residues 134–138, aspartate 167, glycine 180, and asparagine 272 contribute to the substrate site; that span reads LVSGG. Aspartate 300 provides a ligand contact to Fe cation.

This sequence belongs to the KAE1 / TsaD family. It depends on Fe(2+) as a cofactor.

The protein resides in the cytoplasm. It catalyses the reaction L-threonylcarbamoyladenylate + adenosine(37) in tRNA = N(6)-L-threonylcarbamoyladenosine(37) in tRNA + AMP + H(+). In terms of biological role, required for the formation of a threonylcarbamoyl group on adenosine at position 37 (t(6)A37) in tRNAs that read codons beginning with adenine. Is involved in the transfer of the threonylcarbamoyl moiety of threonylcarbamoyl-AMP (TC-AMP) to the N6 group of A37, together with TsaE and TsaB. TsaD likely plays a direct catalytic role in this reaction. The polypeptide is tRNA N6-adenosine threonylcarbamoyltransferase (Shewanella amazonensis (strain ATCC BAA-1098 / SB2B)).